A 223-amino-acid polypeptide reads, in one-letter code: Ribose-5-phosphate isomerase A (223 aa).

Substrate is bound by residues 32–35 (TGST), 83–86 (DGAD), and 96–99 (KGGG). The active-site Proton acceptor is the Glu105. Lys123 is a binding site for substrate.

The protein belongs to the ribose 5-phosphate isomerase family. As to quaternary structure, homodimer.

The catalysed reaction is aldehydo-D-ribose 5-phosphate = D-ribulose 5-phosphate. It participates in carbohydrate degradation; pentose phosphate pathway; D-ribose 5-phosphate from D-ribulose 5-phosphate (non-oxidative stage): step 1/1. Its function is as follows. Catalyzes the reversible conversion of ribose-5-phosphate to ribulose 5-phosphate. This chain is Ribose-5-phosphate isomerase A, found in Acinetobacter baumannii (strain AYE).